A 220-amino-acid chain; its full sequence is Adenylate kinase (220 aa).

10–15 (GAGKGT) is an ATP binding site. The tract at residues 30–59 (STGDMLRAAVKAGSPLGVEAKGYMDAGKLV) is NMP. Residues threonine 31, arginine 36, 57 to 59 (KLV), 85 to 88 (GFPR), and glutamine 92 each bind AMP. Positions 122-150 (GRRTHPASGRTYHVKFNPPKVEGKDDVTG) are disordered. The LID stretch occupies residues 122–159 (GRRTHPASGRTYHVKFNPPKVEGKDDVTGEPLIQRDDD). Residues arginine 123 and 132–133 (TY) contribute to the ATP site. Arginine 156 and arginine 167 together coordinate AMP. Glycine 206 lines the ATP pocket.

It belongs to the adenylate kinase family. Monomer.

The protein localises to the cytoplasm. The enzyme catalyses AMP + ATP = 2 ADP. Its pathway is purine metabolism; AMP biosynthesis via salvage pathway; AMP from ADP: step 1/1. Catalyzes the reversible transfer of the terminal phosphate group between ATP and AMP. Plays an important role in cellular energy homeostasis and in adenine nucleotide metabolism. This chain is Adenylate kinase, found in Burkholderia ambifaria (strain MC40-6).